The chain runs to 322 residues: Digestive cysteine proteinase 1 (322 aa).

Residues 1–16 (MKVVALFLFGLALAAA) form the signal peptide. The propeptide at 17-105 (NPSWEEFKGK…VFTSTDAAPE (89 aa)) is activation peptide. 3 disulfide bridges follow: cysteine 126/cysteine 170, cysteine 160/cysteine 203, and cysteine 262/cysteine 311. Residue cysteine 129 is part of the active site. Catalysis depends on residues histidine 269 and asparagine 289.

Belongs to the peptidase C1 family.

Its activity is regulated as follows. Inhibited by E-64, antipain, leupeptin, heavy metal ions, iodoacetic acid, dithionitrobenzene, p-hydroxymercuri-benzoate; activated by mercaptoethanol and dithiothreitol. The polypeptide is Digestive cysteine proteinase 1 (LCP1) (Homarus americanus (American lobster)).